The sequence spans 55 residues: Omega-ctenitoxin-Pr2a (55 aa).

Cystine bridges form between cysteine 2–cysteine 16, cysteine 9–cysteine 22, cysteine 15–cysteine 37, cysteine 24–cysteine 35, and cysteine 45–cysteine 52.

As to expression, expressed by the venom gland.

It is found in the secreted. In terms of biological role, antagonist of L-type calcium channels (Cav1/CACNA1). In vivo, causes paralysis in posterior limbs, and gradual decrease in movement and aggression during 24 hours after intracerebroventricular injection in mice at dose levels of 3 ug per mouse. This is Omega-ctenitoxin-Pr2a from Phoneutria reidyi (Brazilian Amazonian armed spider).